The chain runs to 208 residues: Uracil phosphoribosyltransferase (208 aa).

5-phospho-alpha-D-ribose 1-diphosphate is bound by residues arginine 78, arginine 103, and 130-138 (DPMLATGGS). Uracil-binding positions include isoleucine 193 and 198–200 (GDA). Aspartate 199 serves as a coordination point for 5-phospho-alpha-D-ribose 1-diphosphate.

This sequence belongs to the UPRTase family. The cofactor is Mg(2+).

It catalyses the reaction UMP + diphosphate = 5-phospho-alpha-D-ribose 1-diphosphate + uracil. The protein operates within pyrimidine metabolism; UMP biosynthesis via salvage pathway; UMP from uracil: step 1/1. With respect to regulation, allosterically activated by GTP. Catalyzes the conversion of uracil and 5-phospho-alpha-D-ribose 1-diphosphate (PRPP) to UMP and diphosphate. In Pectobacterium atrosepticum (strain SCRI 1043 / ATCC BAA-672) (Erwinia carotovora subsp. atroseptica), this protein is Uracil phosphoribosyltransferase.